Consider the following 445-residue polypeptide: MVHQIHVIGGGLAGSEAAWQLAQAGIRVRLSEMRGIEATPAHQTDSLAELVCSNSFRSDDPTNAVGLLHAEMRALGSLIMAKADAHRVPAGSALAVDREGYAEAVTHAVAGHPLIELVRERVDALPADGPVIVATGPLTAAALADSIGAATGADALAFFDAIAPIVHHHSIDMDVAWMASRWDKGETKDYINCPMDKDQYLAFHQALLDGEKTAFKEWEKDTPYFDGCMPIEVMAERGVDTMRYGPMKPVGLDNPRTGRWPYAVVQLRQDNALGTLWNMVGFQTKLKHAEQVRLFRTIPGLGKAEFARLGGLHRNTFIQSPKLLDGALRLKSRPNIRFAGQITGCEGYVESAAIGLLAGRFAAAELLGRPIETPPAATALGALLGHITGGAEADGYQPMNVNFGLFPPLEGAKGGRKRKGDRKAMMAERAGEALKAWMDGGVEPA.

FAD is bound at residue 9–14; that stretch reads GGGLAG.

The protein belongs to the MnmG family. TrmFO subfamily. The cofactor is FAD.

Its subcellular location is the cytoplasm. The catalysed reaction is uridine(54) in tRNA + (6R)-5,10-methylene-5,6,7,8-tetrahydrofolate + NADH + H(+) = 5-methyluridine(54) in tRNA + (6S)-5,6,7,8-tetrahydrofolate + NAD(+). The enzyme catalyses uridine(54) in tRNA + (6R)-5,10-methylene-5,6,7,8-tetrahydrofolate + NADPH + H(+) = 5-methyluridine(54) in tRNA + (6S)-5,6,7,8-tetrahydrofolate + NADP(+). Functionally, catalyzes the folate-dependent formation of 5-methyl-uridine at position 54 (M-5-U54) in all tRNAs. This chain is Methylenetetrahydrofolate--tRNA-(uracil-5-)-methyltransferase TrmFO, found in Rhizorhabdus wittichii (strain DSM 6014 / CCUG 31198 / JCM 15750 / NBRC 105917 / EY 4224 / RW1) (Sphingomonas wittichii).